A 256-amino-acid polypeptide reads, in one-letter code: GTP cyclohydrolase FolE2 (256 aa).

This sequence belongs to the GTP cyclohydrolase IV family.

It catalyses the reaction GTP + H2O = 7,8-dihydroneopterin 3'-triphosphate + formate + H(+). It functions in the pathway cofactor biosynthesis; 7,8-dihydroneopterin triphosphate biosynthesis; 7,8-dihydroneopterin triphosphate from GTP: step 1/1. Its function is as follows. Converts GTP to 7,8-dihydroneopterin triphosphate. The sequence is that of GTP cyclohydrolase FolE2 from Caldicellulosiruptor saccharolyticus (strain ATCC 43494 / DSM 8903 / Tp8T 6331).